A 217-amino-acid polypeptide reads, in one-letter code: Small ribosomal subunit protein uS3 (217 aa).

The KH type-2 domain occupies 38-106; the sequence is IRQLIQTKLA…QVHINIVEIK (69 aa).

This sequence belongs to the universal ribosomal protein uS3 family. As to quaternary structure, part of the 30S ribosomal subunit. Forms a tight complex with proteins S10 and S14.

Binds the lower part of the 30S subunit head. Binds mRNA in the 70S ribosome, positioning it for translation. The sequence is that of Small ribosomal subunit protein uS3 from Lactococcus lactis subsp. cremoris (strain MG1363).